A 217-amino-acid chain; its full sequence is CLA biosynthesis enone reductase (217 aa).

Arg20, Ser22, and Arg24 together coordinate FMN. Cys51 contacts 10-oxooctadecanoate. 2 residues coordinate FMN: Asn78 and Gln81. Residue Arg118 coordinates 10-oxooctadecanoate. Residues Asn165, Ser168, Gly169, and Arg206 each contribute to the FMN site.

Belongs to the nitroreductase family. As to quaternary structure, homodimer. Requires FMN as cofactor.

The enzyme catalyses 10-oxo-(11E)-octadecenoate + NADH + H(+) = 10-oxooctadecanoate + NAD(+). It participates in lipid metabolism; fatty acid metabolism. In terms of biological role, is involved in a saturation metabolic pathway of polyunsaturated fatty acids, that detoxifies unsaturated fatty acids and generates hydroxy fatty acids, oxo fatty acids, conjugated fatty acids such as conjugated linoleic acids (CLAs), and partially saturated trans-fatty acids as intermediates. CLA-ER catalyzes the saturation of the carbon-carbon double bond in 10-oxo-(11E)-octadecenoate to produce 10-oxooctadecanoate, during linoleate metabolism. As part of the gut microbiome, this enzyme modifies host fatty acid composition and is expected to improve human health by altering lipid metabolism related to the onset of metabolic syndrome. The polypeptide is CLA biosynthesis enone reductase (Lactiplantibacillus plantarum (Lactobacillus plantarum)).